Consider the following 101-residue polypeptide: Urease subunit beta (101 aa).

The protein belongs to the urease beta subunit family. In terms of assembly, heterotrimer of UreA (gamma), UreB (beta) and UreC (alpha) subunits. Three heterotrimers associate to form the active enzyme.

The protein resides in the cytoplasm. The enzyme catalyses urea + 2 H2O + H(+) = hydrogencarbonate + 2 NH4(+). The protein operates within nitrogen metabolism; urea degradation; CO(2) and NH(3) from urea (urease route): step 1/1. The protein is Urease subunit beta of Burkholderia ambifaria (strain ATCC BAA-244 / DSM 16087 / CCUG 44356 / LMG 19182 / AMMD) (Burkholderia cepacia (strain AMMD)).